We begin with the raw amino-acid sequence, 228 residues long: PKHD-type hydroxylase Rmet_0838 (228 aa).

The 102-residue stretch at 78–179 folds into the Fe2OG dioxygenase domain; the sequence is RVLPPMFNRY…RWASFFWAQS (102 aa). Fe cation-binding residues include H96, D98, and H160. R170 contacts 2-oxoglutarate.

It depends on Fe(2+) as a cofactor. L-ascorbate serves as cofactor.

This chain is PKHD-type hydroxylase Rmet_0838, found in Cupriavidus metallidurans (strain ATCC 43123 / DSM 2839 / NBRC 102507 / CH34) (Ralstonia metallidurans).